The chain runs to 372 residues: 4-hydroxy-3-methylbut-2-en-1-yl diphosphate synthase (flavodoxin) (372 aa).

[4Fe-4S] cluster is bound by residues cysteine 270, cysteine 273, cysteine 305, and glutamate 312.

This sequence belongs to the IspG family. [4Fe-4S] cluster is required as a cofactor.

It catalyses the reaction (2E)-4-hydroxy-3-methylbut-2-enyl diphosphate + oxidized [flavodoxin] + H2O + 2 H(+) = 2-C-methyl-D-erythritol 2,4-cyclic diphosphate + reduced [flavodoxin]. It functions in the pathway isoprenoid biosynthesis; isopentenyl diphosphate biosynthesis via DXP pathway; isopentenyl diphosphate from 1-deoxy-D-xylulose 5-phosphate: step 5/6. Converts 2C-methyl-D-erythritol 2,4-cyclodiphosphate (ME-2,4cPP) into 1-hydroxy-2-methyl-2-(E)-butenyl 4-diphosphate. The polypeptide is 4-hydroxy-3-methylbut-2-en-1-yl diphosphate synthase (flavodoxin) (Escherichia coli O9:H4 (strain HS)).